Here is a 228-residue protein sequence, read N- to C-terminus: Large ribosomal subunit protein uL16 (228 aa).

The protein belongs to the universal ribosomal protein uL16 family. As to quaternary structure, component of the small ribosomal subunit. Mature ribosomes consist of a small (40S) and a large (60S) subunit. The 40S subunit contains about 33 different proteins and 1 molecule of RNA (18S). The 60S subunit contains about 49 different proteins and 3 molecules of RNA (25S, 5.8S and 5S).

The protein is Large ribosomal subunit protein uL16 (RPL10) of Pinus taeda (Loblolly pine).